The sequence spans 1407 residues: DNA-directed RNA polymerase subunit beta' (1407 aa).

Cysteine 70, cysteine 72, cysteine 85, and cysteine 88 together coordinate Zn(2+). 3 residues coordinate Mg(2+): aspartate 460, aspartate 462, and aspartate 464. Zn(2+)-binding residues include cysteine 814, cysteine 888, cysteine 895, and cysteine 898.

It belongs to the RNA polymerase beta' chain family. In terms of assembly, the RNAP catalytic core consists of 2 alpha, 1 beta, 1 beta' and 1 omega subunit. When a sigma factor is associated with the core the holoenzyme is formed, which can initiate transcription. Requires Mg(2+) as cofactor. Zn(2+) is required as a cofactor.

The catalysed reaction is RNA(n) + a ribonucleoside 5'-triphosphate = RNA(n+1) + diphosphate. In terms of biological role, DNA-dependent RNA polymerase catalyzes the transcription of DNA into RNA using the four ribonucleoside triphosphates as substrates. This Erwinia tasmaniensis (strain DSM 17950 / CFBP 7177 / CIP 109463 / NCPPB 4357 / Et1/99) protein is DNA-directed RNA polymerase subunit beta'.